The sequence spans 404 residues: Cysteine desulfurase IscS (404 aa).

Pyridoxal 5'-phosphate-binding positions include 75–76 (AT), Asn155, Gln183, and 203–205 (SAH). Lys206 bears the N6-(pyridoxal phosphate)lysine mark. A pyridoxal 5'-phosphate-binding site is contributed by Thr243. Catalysis depends on Cys328, which acts as the Cysteine persulfide intermediate. A [2Fe-2S] cluster-binding site is contributed by Cys328.

The protein belongs to the class-V pyridoxal-phosphate-dependent aminotransferase family. NifS/IscS subfamily. Homodimer. Forms a heterotetramer with IscU, interacts with other sulfur acceptors. It depends on pyridoxal 5'-phosphate as a cofactor.

Its subcellular location is the cytoplasm. The enzyme catalyses (sulfur carrier)-H + L-cysteine = (sulfur carrier)-SH + L-alanine. It functions in the pathway cofactor biosynthesis; iron-sulfur cluster biosynthesis. Master enzyme that delivers sulfur to a number of partners involved in Fe-S cluster assembly, tRNA modification or cofactor biosynthesis. Catalyzes the removal of elemental sulfur atoms from cysteine to produce alanine. Functions as a sulfur delivery protein for Fe-S cluster synthesis onto IscU, an Fe-S scaffold assembly protein, as well as other S acceptor proteins. This chain is Cysteine desulfurase IscS, found in Pseudomonas aeruginosa (strain UCBPP-PA14).